We begin with the raw amino-acid sequence, 108 residues long: Bublin coiled-coil protein (108 aa).

2 disordered regions span residues 1–23 and 67–108; these read MSGPNGDPNISVEDGLINDDDDF and RLEF…DEGS. Residues 25 to 73 are a coiled coil; that stretch reads SEEYEAINSMLDQINSYLDDLEERNDSLNGKLHELMESNRQARLEFRAQ. The span at 99–108 shows a compositional bias: basic and acidic residues; it reads ENDKKIDEGS.

It belongs to the UPF0184 (EST00098) family.

The protein resides in the cell junction. Its subcellular location is the cytoplasm. It is found in the cytoskeleton. In terms of biological role, essential for intermediate filament organization in intestinal cells, interacts with intermediate filament and regulates intestinal lumen morphology. The sequence is that of Bublin coiled-coil protein (bbln) from Takifugu rubripes (Japanese pufferfish).